Reading from the N-terminus, the 87-residue chain is Protein moa-2 (87 aa).

Residues 23 to 87 (GTAMRHEPSR…VWTASREESS (65 aa)) are disordered. 2 stretches are compositionally biased toward basic and acidic residues: residues 26 to 39 (MRHE…ESAP) and 50 to 63 (RNEH…EREP).

The polypeptide is Protein moa-2 (Caenorhabditis elegans).